The chain runs to 253 residues: Solute carrier family 66 member 2 (253 aa).

The next 6 helical transmembrane spans lie at 7–27 (GWLLVPLHQLVSWGAAGAMVF), 49–69 (FSTYVCLVLLVANILRILFWF), 72–92 (HFESPLLWQSVVMILTMLLML), 125–145 (FADYVQCVLAFTGVAGYITYL), 150–170 (ALFVETLGFLAVLTEAMLGVP), and 214–234 (VCGLLQVLVDLAILGQAYVFT). The PQ-loop 1 domain maps to 14-80 (HQLVSWGAAG…RHFESPLLWQ (67 aa)). The PQ-loop 2 domain maps to 160–215 (AVLTEAMLGVPQLYRNHRHQSTEGMSIKMVLMWTSGDTFKTAYFLLNGAPLQFSVC).

Its subcellular location is the membrane. The protein is Solute carrier family 66 member 2 (SLC66A2) of Bos taurus (Bovine).